The chain runs to 247 residues: Cell division protein ZapD (247 aa).

This sequence belongs to the ZapD family. As to quaternary structure, interacts with FtsZ.

The protein localises to the cytoplasm. Functionally, cell division factor that enhances FtsZ-ring assembly. Directly interacts with FtsZ and promotes bundling of FtsZ protofilaments, with a reduction in FtsZ GTPase activity. The chain is Cell division protein ZapD from Escherichia coli O17:K52:H18 (strain UMN026 / ExPEC).